Consider the following 474-residue polypeptide: Rhodanese-like domain-containing protein 7 (474 aa).

Disordered regions lie at residues 20 to 68 (SSPP…SSLK) and 179 to 198 (VSPE…PLAA). Low complexity predominate over residues 53-68 (QSQPHKLSSSPSSSLK). In terms of domain architecture, Rhodanese spans 245 to 368 (SDPETVVIDV…YLEEVPKTES (124 aa)). The active-site Cysteine persulfide intermediate is the Cys328. A disordered region spans residues 432-474 (RARARQTQFEEWGVIGGPDKGRRPATKPDSPRKKINAKLGSSI).

This is Rhodanese-like domain-containing protein 7 (STR7) from Arabidopsis thaliana (Mouse-ear cress).